The primary structure comprises 640 residues: Threonine--tRNA ligase (640 aa).

The TGS domain maps to 1–61 (MPVITLPDGS…SNDATLQIIT (61 aa)). The tract at residues 242 to 533 (DHRKIGKQLD…LIEHYAGVFP (292 aa)) is catalytic. C333, H384, and H510 together coordinate Zn(2+).

This sequence belongs to the class-II aminoacyl-tRNA synthetase family. In terms of assembly, homodimer. Requires Zn(2+) as cofactor.

It localises to the cytoplasm. The enzyme catalyses tRNA(Thr) + L-threonine + ATP = L-threonyl-tRNA(Thr) + AMP + diphosphate + H(+). Catalyzes the attachment of threonine to tRNA(Thr) in a two-step reaction: L-threonine is first activated by ATP to form Thr-AMP and then transferred to the acceptor end of tRNA(Thr). Also edits incorrectly charged L-seryl-tRNA(Thr). In Pseudomonas putida (strain ATCC 47054 / DSM 6125 / CFBP 8728 / NCIMB 11950 / KT2440), this protein is Threonine--tRNA ligase.